Here is a 780-residue protein sequence, read N- to C-terminus: Cullin-5 (780 aa).

The residue at position 34 (Ser34) is a Phosphoserine. Thr210 bears the Phosphothreonine mark. The Cullin neddylation domain occupies 711–772 (RILRTQEAII…HKYIRRDEAD (62 aa)). Residue Lys724 forms a Glycyl lysine isopeptide (Lys-Gly) (interchain with G-Cter in NEDD8) linkage.

This sequence belongs to the cullin family. In terms of assembly, component of multiple cullin-5-RING E3 ubiquitin-protein ligase complexes (ECS complexes, also named CRL5 complexes) formed of CUL5, Elongin BC (ELOB and ELOC), RNF7/RBX2 and a variable SOCS box domain-containing protein as substrate-specific recognition component. CUL5-containing ECS complexes specifically contain RNF7/RBX2, and not RBX1, as catalytic subunit. Component of the ECS(ASB2) complex with the substrate recognition component ASB2. Component of the ECS(ASB6) complex with the substrate recognition component ASB6. Component of the ECS(ASB7) complex with the substrate recognition component ASB7. Component of the ECS(ASB9) complex with the substrate recognition component ASB9. Component of the ECS(ASB11) complex with the substrate recognition component ASB11. Component of the ECS(ASB12) complex with the substrate recognition component ASB12. Component of the ECS(LRRC41) complex with the substrate recognition component LRRC41. Component of the ECS(SOCS1) complex with the substrate recognition component SOCS1. Component of the ECS(SOCS2) complex with the substrate recognition component SOCS2. Component of the ECS(WSB1) complex with the substrate recognition subunit WSB1. Component of the ECS(SOCS3) complex with the substrate recognition component SOCS3. Component of the ECS(SOCS7) complex with the substrate recognition component SOCS7. Component of the ECS(SPSB1) complex with the substrate recognition component SPSB1. Component of the ECS(SPSB3) complex with the substrate recognition component SPSB3. Component of the ECS(SPSB2) complex with the substrate recognition component SPSB2. Component of the ECS(SPSB4) complex with the substrate recognition component SPSB4. Component of the ECS(RAB40) complex with the substrate recognition subunit RAB40A, RAB40B or RAB40C. Component of the ECS(KLHDC1) complex with the substrate recognition component KLHDC1. Component of the ECS(PCMTD1) complex with the substrate recognition subunit PCMTD1. May also form complexes containing RBX1 and ELOA or VHL; additional evidence is however required to confirm this result in vivo. Interacts (when neddylated) with ARIH2; leading to activate the E3 ligase activity of ARIH2. Interacts with ERCC6; the interaction is induced by DNA damaging agents or inhibitors of RNA polymerase II elongation. Interacts with ELOA (via the BC-box). Interacts (unneddylated form) with DCUN1D1, DCUN1D2, DCUN1D3, DCUN1D4 and DCUN1D5; these interactions promote the cullin neddylation. Post-translationally, neddylated; which enhances the ubiquitination activity of ECS complexes and prevents binding of the inhibitor CAND1. Deneddylated via its interaction with the COP9 signalosome (CSN).

Its subcellular location is the nucleus. It participates in protein modification; protein ubiquitination. Core component of multiple cullin-5-RING E3 ubiquitin-protein ligase complexes (ECS complexes, also named CRL5 complexes), which mediate the ubiquitination and subsequent proteasomal degradation of target proteins. Acts a scaffold protein that contributes to catalysis through positioning of the substrate and the ubiquitin-conjugating enzyme. The functional specificity of the E3 ubiquitin-protein ligase complex depends on the variable SOCS box-containing substrate recognition component. Acts as a key regulator of neuron positioning during cortex development: component of various SOCS-containing ECS complexes, such as the ECS(SOCS7) complex, that regulate reelin signaling by mediating ubiquitination and degradation of DAB1. ECS(SOCS1) seems to direct ubiquitination of JAK2. The ECS(SOCS2) complex mediates the ubiquitination and subsequent proteasomal degradation of phosphorylated EPOR and GHR. The ECS(SPSB3) complex catalyzes ubiquitination of nuclear CGAS. ECS(KLHDC1) complex is part of the DesCEND (destruction via C-end degrons) pathway and mediates ubiquitination and degradation of truncated SELENOS selenoprotein produced by failed UGA/Sec decoding, which ends with a glycine. The ECS(ASB9) complex mediates ubiquitination and degradation of CKB. As part of some ECS complex, promotes 'Lys-11'-linked ubiquitination and degradation of BTRC. As part of a multisubunit ECS complex, polyubiquitinates monoubiquitinated POLR2A. As part of the ECS(RAB40C) complex, mediates ANKRD28 ubiquitination and degradation, thereby regulating protein phosphatase 6 (PP6) complex activity and focal adhesion assembly during cell migration. As part of the ECS(RAB40A) complex, mediates RHOU 'Lys-48'-linked ubiquitination and degradation, thus inhibiting focal adhesion disassembly during cell migration. As part of the ECS(RAB40B) complex, mediates LIMA1/EPLIN and RAP2 ubiquitination, thereby regulating actin cytoskeleton dynamics and stress fiber formation during cell migration. May form a cell surface vasopressin receptor. This Rattus norvegicus (Rat) protein is Cullin-5.